We begin with the raw amino-acid sequence, 708 residues long: Ion-translocating oxidoreductase complex subunit C (708 aa).

2 consecutive 4Fe-4S ferredoxin-type domains span residues 369 to 397 and 407 to 436; these read GEPQ…QQLY and KATT…VQYF. Residues C377, C380, C383, C387, C416, C419, C422, and C426 each coordinate [4Fe-4S] cluster. Residues 630–682 form a disordered region; it reads AKARKLEQQQANAEPEEQIDPRKAAVEAAIARAKARKLEQQQANAEPEEQIDP.

The protein belongs to the 4Fe4S bacterial-type ferredoxin family. RnfC subfamily. The complex is composed of six subunits: RsxA, RsxB, RsxC, RsxD, RsxE and RsxG. Requires [4Fe-4S] cluster as cofactor.

The protein resides in the cell inner membrane. Part of a membrane-bound complex that couples electron transfer with translocation of ions across the membrane. Required to maintain the reduced state of SoxR. The protein is Ion-translocating oxidoreductase complex subunit C of Escherichia coli (strain UTI89 / UPEC).